The primary structure comprises 883 residues: Leucine--tRNA ligase (883 aa).

The 'HIGH' region signature appears at 43-53 (PYPSGRIHIGH). Positions 630-634 (KMSKS) match the 'KMSKS' region motif. K633 lines the ATP pocket.

This sequence belongs to the class-I aminoacyl-tRNA synthetase family.

The protein localises to the cytoplasm. The catalysed reaction is tRNA(Leu) + L-leucine + ATP = L-leucyl-tRNA(Leu) + AMP + diphosphate. This is Leucine--tRNA ligase from Nitrobacter winogradskyi (strain ATCC 25391 / DSM 10237 / CIP 104748 / NCIMB 11846 / Nb-255).